Consider the following 348-residue polypeptide: Probable dual-specificity RNA methyltransferase RlmN (348 aa).

Residue Glu90 is the Proton acceptor of the active site. The region spanning 96 to 324 is the Radical SAM core domain; sequence AAERLTVCVS…ASVRHTRGLE (229 aa). Cys103 and Cys329 are oxidised to a cystine. [4Fe-4S] cluster-binding residues include Cys110, Cys114, and Cys117. Residues 157-158, Ser187, 210-212, and Asn286 each bind S-adenosyl-L-methionine; these read GE and SLH. Cys329 functions as the S-methylcysteine intermediate in the catalytic mechanism.

The protein belongs to the radical SAM superfamily. RlmN family. [4Fe-4S] cluster serves as cofactor.

It localises to the cytoplasm. It catalyses the reaction adenosine(2503) in 23S rRNA + 2 reduced [2Fe-2S]-[ferredoxin] + 2 S-adenosyl-L-methionine = 2-methyladenosine(2503) in 23S rRNA + 5'-deoxyadenosine + L-methionine + 2 oxidized [2Fe-2S]-[ferredoxin] + S-adenosyl-L-homocysteine. The catalysed reaction is adenosine(37) in tRNA + 2 reduced [2Fe-2S]-[ferredoxin] + 2 S-adenosyl-L-methionine = 2-methyladenosine(37) in tRNA + 5'-deoxyadenosine + L-methionine + 2 oxidized [2Fe-2S]-[ferredoxin] + S-adenosyl-L-homocysteine. Functionally, specifically methylates position 2 of adenine 2503 in 23S rRNA and position 2 of adenine 37 in tRNAs. This Gloeobacter violaceus (strain ATCC 29082 / PCC 7421) protein is Probable dual-specificity RNA methyltransferase RlmN.